The chain runs to 470 residues: E3 ubiquitin-protein ligase TRAIP (470 aa).

The segment at 7–50 adopts an RING-type; atypical zinc-finger fold; that stretch reads CTICSDFFDHSRDVAAIHCGHTFHLQCLIQWFETAPSRTCPQCR. A coiled-coil region spans residues 76–277; that stretch reads AEFLKNELDS…RKKLMILQGT (202 aa). Positions 211–470 are interaction with CYLD; that stretch reads LKEARKATGE…QPKLDTFLCQ (260 aa). Positions 461–470 match the PIP-box motif; sequence QPKLDTFLCQ.

This sequence belongs to the TRAIP family. As to quaternary structure, interacts (via PIP-box) with PCNA. Binds TRAF1, TRAF2, TRAF3, TRAF5 and TRAF6 is part of the receptor-TRAF signaling complex. May interact with CYLD; the C-terminus interacts with CYLD, however the interaction was not detected with the full-length protein. Interacts with POLK and POLN. Interacts with UIMC1. Autoubiquitinated. Post-translationally, sumoylated; sumoylation is required for nuclear localization. Sumoylation increases protein stability, possibly by preventing ubiquitination. Detected in testis and thymus, and at lower levels in spleen.

It is found in the nucleus. The protein resides in the nucleoplasm. The protein localises to the nucleolus. Its subcellular location is the chromosome. It localises to the cytoplasm. It is found in the perinuclear region. The enzyme catalyses S-ubiquitinyl-[E2 ubiquitin-conjugating enzyme]-L-cysteine + [acceptor protein]-L-lysine = [E2 ubiquitin-conjugating enzyme]-L-cysteine + N(6)-ubiquitinyl-[acceptor protein]-L-lysine.. The protein operates within protein modification; protein ubiquitination. E3 ubiquitin ligase required to protect genome stability in response to replication stress. Acts as a key regulator of interstrand cross-link repair, which takes place when both strands of duplex DNA are covalently tethered together, thereby blocking replication and transcription. During mitosis, controls the choice between the two pathways of replication-coupled interstrand-cross-link repair by mediating ubiquitination of MCM7 subunit of the CMG helicase complex. Short ubiquitin chains on MCM7 promote recruitment of DNA glycosylase NEIL3. If the interstrand cross-link cannot be cleaved by NEIL3, the ubiquitin chains continue to grow on MCM7, promoting the unloading of the CMG helicase complex by the VCP/p97 ATPase, enabling the Fanconi anemia DNA repair pathway. Only catalyzes ubiquitination of MCM7 when forks converge. Also involved in the repair of covalent DNA-protein cross-links (DPCs) during DNA synthesis: promotes ubiquitination of DPCs, leading to their degradation by the proteasome. Has also been proposed to play a role in promoting translesion synthesis by mediating the assembly of 'Lys-63'-linked poly-ubiquitin chains on the Y-family polymerase POLN in order to facilitate bypass of DNA lesions and preserve genomic integrity. The function in translesion synthesis is however controversial. Acts as a regulator of the spindle assembly checkpoint. Also acts as a negative regulator of innate immune signaling by inhibiting activation of NF-kappa-B mediated by TNF. Negatively regulates TLR3/4- and RIG-I-mediated IRF3 activation and subsequent IFNB1 production and cellular antiviral response by promoting 'Lys-48'-linked polyubiquitination of TNK1 leading to its proteasomal degradation. The protein is E3 ubiquitin-protein ligase TRAIP of Mus musculus (Mouse).